Reading from the N-terminus, the 404-residue chain is Lissencephaly-1 homolog (404 aa).

Residues 7–39 (QKEEINRAIAEYMQNNGYSESFSVFLKESSLSE) enclose the LisH domain. Positions 54-81 (TTVLRLQRKVNDLESKLQESQREINHGA) form a coiled coil. Over residues 69 to 89 (KLQESQREINHGAPTRDKRQA) the composition is skewed to basic and acidic residues. Residues 69 to 90 (KLQESQREINHGAPTRDKRQAA) are disordered. 7 WD repeats span residues 104–145 (GHRL…RTLK), 146–185 (GHTD…DCLK), 189–228 (GHEH…CVYT), 231–270 (GHND…AKLV), 273–327 (DHEH…VLFT), 330–369 (AHEN…CMKA), and 372–404 (AHEH…WECR).

Belongs to the WD repeat LIS1/nudF family. As to quaternary structure, component of a dynein-regulating complex composed of at least lis-1 and nud-2. Interacts with nud-2; the interaction is direct. As to expression, expressed in all classes of neurons in the ventral cord. Expressed in the multinucleate spermathecal valves and adult seam cells.

It localises to the cytoplasm. Its subcellular location is the cytoskeleton. The protein localises to the microtubule organizing center. The protein resides in the centrosome. It is found in the chromosome. It localises to the centromere. Its subcellular location is the kinetochore. The protein localises to the nucleus envelope. Functionally, positively regulates the activity of the minus-end directed microtubule motor protein dynein. May enhance dynein-mediated microtubule sliding by targeting dynein to the microtubule plus end. Required for several dynein- and microtubule-dependent processes such as nuclear migration during cell division. Part of a complex with nud-2, which is recruited to the nuclear envelope by unc-83, where, in turn, it recruits dynein to the nuclear surface and regulates nuclear migration in hypodermal precursor cells. Plays a role in GABAergic synaptic vesicle localization in the ventral nerve cord. Required for neuronal cell differentiation. The chain is Lissencephaly-1 homolog from Caenorhabditis elegans.